The primary structure comprises 209 residues: dTTP/UTP pyrophosphatase (209 aa).

Asp88 acts as the Proton acceptor in catalysis.

The protein belongs to the Maf family. YhdE subfamily. Requires a divalent metal cation as cofactor.

The protein resides in the cytoplasm. The enzyme catalyses dTTP + H2O = dTMP + diphosphate + H(+). The catalysed reaction is UTP + H2O = UMP + diphosphate + H(+). Nucleoside triphosphate pyrophosphatase that hydrolyzes dTTP and UTP. May have a dual role in cell division arrest and in preventing the incorporation of modified nucleotides into cellular nucleic acids. The sequence is that of dTTP/UTP pyrophosphatase from Burkholderia mallei (strain ATCC 23344).